We begin with the raw amino-acid sequence, 379 residues long: Chaperone protein DnaJ (379 aa).

The region spanning 5 to 70 (DYYEVLGVGK…EKKAAYDQYG (66 aa)) is the J domain. The segment at 139–217 (GHEAQIRVPH…CHGQGKLKSQ (79 aa)) adopts a CR-type zinc-finger fold. 8 residues coordinate Zn(2+): cysteine 152, cysteine 155, cysteine 169, cysteine 172, cysteine 191, cysteine 194, cysteine 205, and cysteine 208. CXXCXGXG motif repeat units lie at residues 152–159 (CEHCHGNG), 169–176 (CPTCNGVG), 191–198 (CPKCHGSG), and 205–212 (CTKCHGQG).

This sequence belongs to the DnaJ family. As to quaternary structure, homodimer. It depends on Zn(2+) as a cofactor.

The protein localises to the cytoplasm. In terms of biological role, participates actively in the response to hyperosmotic and heat shock by preventing the aggregation of stress-denatured proteins and by disaggregating proteins, also in an autonomous, DnaK-independent fashion. Unfolded proteins bind initially to DnaJ; upon interaction with the DnaJ-bound protein, DnaK hydrolyzes its bound ATP, resulting in the formation of a stable complex. GrpE releases ADP from DnaK; ATP binding to DnaK triggers the release of the substrate protein, thus completing the reaction cycle. Several rounds of ATP-dependent interactions between DnaJ, DnaK and GrpE are required for fully efficient folding. Also involved, together with DnaK and GrpE, in the DNA replication of plasmids through activation of initiation proteins. This is Chaperone protein DnaJ from Cupriavidus metallidurans (strain ATCC 43123 / DSM 2839 / NBRC 102507 / CH34) (Ralstonia metallidurans).